A 617-amino-acid polypeptide reads, in one-letter code: MRCLAARVNYKTLIIICALFTLVTVLLWNKCSSDKAIQVPRHLSSGFRVDALEKKAAASESNNYVNHMAKQSEEAFPQEQQKAPPVVGGFNNNGGGRVLGLKYEEIDCLINDEHTIKGRREGNEVFLPFTWVEKYFDVYGKVVQYDGYDRFEFSHSYSKVYAQRAPYHPDGVFMSFEGYNVEVRDRVKCISGVEGVPLSTQWGPQGYFYPIQIAQYGLSHYSKNLTEKPPHIEVYETAEDRDKNSKPNDWTVPKGCFMASVADKSRFTNVKQFIAPETSEGVSLQLGNTKDFIISFDLKFLTNGSVSVVLETTEKNQLFTVHYVSNTQLIAFKERDIYYGIGPRTSWSTVTRDLVTDLRKGVGLSNTKAVKPTRIMPKKVVRLIAKGKGFLDNITISTTAHMAAFFAASDWLVRNQDEKGGWPIMVTRKLGEGFKSLEPGWYSAMAQGQAISTLVRAYLLTKDHIFLNSALRATAPYKFLSEQHGVKAVFMNKHDWYEEYPTTPSSFVLNGFMYSLIGLYDLKETAGEKLGKEARSLYERGMESLKAMLPLYDTGSGTIYDLRHFMLGIAPNLARWDYHTTHINQLQLLSTIDESPIFKEFVKRWKSYLKGSRAKHN.

Over 1-11 (MRCLAARVNYK) the chain is Cytoplasmic. Residues 12 to 28 (TLIIICALFTLVTVLLW) form a helical; Signal-anchor for type II membrane protein membrane-spanning segment. The Lumenal portion of the chain corresponds to 29–617 (NKCSSDKAIQ…YLKGSRAKHN (589 aa)). Residues Y179, 184-186 (RDR), Q201, Y209, Q212, and Q215 each bind substrate. T237, E239, T268, N269, and D392 together coordinate Ca(2+). Residues 429–432 (KLGE), 499–500 (EY), N510, Y514, Y560, R563, and 572–581 (NLARWDYHTT) contribute to the substrate site.

It belongs to the D-glucuronyl C5-epimerase family. In terms of assembly, homodimer. Interacts with HS2ST1.

The protein resides in the golgi apparatus membrane. It catalyses the reaction [heparosan-N-sulfate](n) = [heparan-N-sulfate](n). It participates in glycan metabolism; heparan sulfate biosynthesis. Its pathway is glycan metabolism; heparin biosynthesis. Functionally, converts D-glucuronic acid residues adjacent to N-sulfate sugar residues to L-iduronic acid residues, both in maturing heparan sulfate (HS) and heparin chains. This is important for further modifications that determine the specificity of interactions between these glycosaminoglycans and proteins. In Bos taurus (Bovine), this protein is D-glucuronyl C5-epimerase (GLCE).